Reading from the N-terminus, the 698-residue chain is Protein no-on-transient A (698 aa).

Polar residues predominate over residues 1-29; the sequence is MENSVKMDTSGNSTPLPQRQARANNQPNK. Residues 1-247 form a disordered region; the sequence is MENSVKMDTS…SGGGNNSQRG (247 aa). The span at 61 to 86 shows a compositional bias: gly residues; that stretch reads NGGGGSVGGGGGGGGGSGGGGGGGGQ. Low complexity-rich tracts occupy residues 108-126 and 145-197; these read RGGNQNRSNFQNQNQNQKS and ANNA…QNQA. Composition is skewed to gly residues over residues 201–220 and 228–242; these read RGGGGGGGGGGGGGGGGGGG and SRGGGGGGQNSGGGN. 2 consecutive RRM domains span residues 281–353 and 355–441; these read NRLY…FAPN and TILR…DDND. A coiled-coil region spans residues 484-582; it reads DLFKSKQDAL…DMRRRQQENT (99 aa). Disordered regions lie at residues 515–571 and 597–698; these read QETE…VRQE and QEGF…RRRF. Positions 518–561 are enriched in basic and acidic residues; that stretch reads ELSRQELRKRESDNERKKLEWEMREKQAEEMRKREEETMRRHQT. The segment covering 599–623 has biased composition (gly residues); that stretch reads GFGGGNNGGGGGGGGGGGGVGGGVG. 2 stretches are compositionally biased toward low complexity: residues 624–636 and 643–660; these read NSNFDNFGGNSNS and GNNNSSMAGNNAGPGANN.

Functionally, required for normal vision and courtship behavior in Drosophila. This Drosophila littoralis (Fruit fly) protein is Protein no-on-transient A (nonA).